We begin with the raw amino-acid sequence, 305 residues long: tRNA dimethylallyltransferase (305 aa).

Position 14 to 21 (14 to 21) interacts with ATP; sequence GPTASGKS. 16–21 provides a ligand contact to substrate; the sequence is TASGKS. Positions 39 to 42 are interaction with substrate tRNA; it reads DSMQ.

This sequence belongs to the IPP transferase family. As to quaternary structure, monomer. Mg(2+) serves as cofactor.

It catalyses the reaction adenosine(37) in tRNA + dimethylallyl diphosphate = N(6)-dimethylallyladenosine(37) in tRNA + diphosphate. Its function is as follows. Catalyzes the transfer of a dimethylallyl group onto the adenine at position 37 in tRNAs that read codons beginning with uridine, leading to the formation of N6-(dimethylallyl)adenosine (i(6)A). This is tRNA dimethylallyltransferase from Bradyrhizobium sp. (strain BTAi1 / ATCC BAA-1182).